The primary structure comprises 217 residues: MTAALPSTLELLKDVHLGLPVPCHDPARLALLSGHYLYYHYGCDGLDDRGWGCGYRTLQTLCSWPGGQSSGVPGLPALQGALEAMGDKPPGFRGSRNWIGCVEASLCLEHFGGPQGRLCHLPRGVGLRGEEERLYSHFTTGGGPVMVGGDADAQSKALLGICEGPGSEVYVLILDPHYWGTPKNRCELQAAGWVGWQKVKSVFDSNSFYNLCFTRNL.

Catalysis depends on residues Cys-53, Asp-175, and His-177.

It belongs to the peptidase C78 family. In terms of tissue distribution, widely expressed. Expressed at higher level in brain, heart, kidney and skeletal muscle.

Its subcellular location is the cytoplasm. The protein localises to the cytosol. Its function is as follows. Thiol-dependent isopeptidase that specifically mediate the processing of UFM1 precursors as well as the deconjugation of UFM1 from target proteins. Mainly responsible for the maturation of the UFM1 precursor, a prerequisite for conjugation reactions. The protein is Ufm1-specific protease 1 of Mus musculus (Mouse).